The chain runs to 180 residues: MIPKKAFVVKGTGVHKDKLASFELALRDAGIEKFNLVTVSSILPPNCSIVSRKEGLEELAPGQIVYCVMAKNQTNEPERMIAAAIGNAVPVDSNDYGYISEHHSFGEDERTAGIYAEDLAATMLATTLGIEFDADSAWGERERVYKASGHIFDTVHYCRCVKGDENGLWTTVVVSMVFVL.

Ser-41 is subject to Pyruvic acid (Ser).

This sequence belongs to the PdaD family. Pyruvate serves as cofactor.

The enzyme catalyses L-arginine + H(+) = agmatine + CO2. The sequence is that of Pyruvoyl-dependent arginine decarboxylase from Methanococcoides burtonii (strain DSM 6242 / NBRC 107633 / OCM 468 / ACE-M).